The chain runs to 374 residues: MALRSLIADARRLVVKVGSSLVTDDGRGLDQAAIARWAAQIAALRAAGKEVVLVSSGAIAEGMQRLGWTRRPKEIHELQAAAAVGQMGLAQVYESEFARHGIRTAQVLLTHGDLADRERYLNARSTLLTLLGLGVVPIINENDTVVTDEIKFGDNDTLGALVTNLIEGDALIILTDQRGLYTADPRKHPDARFVDEAQAGAPELEAMAGGAGSSIGKGGMLTKIVAAKRAAKSGAHTVIASGREADVLARLAGGEAIGTQLRAPTGRMAARKQWMIDHLQLRGRVVLDAGAVDKLTAGGKSLLPIGVTEVQGEFARGEVISCVDTAGREVARGLTNYSAAEARLIARKASSEIEAVLGYVSAAELVHRDNLVLL.

Lys-16 is an ATP binding site. The substrate site is built by Ser-56, Asp-143, and Asn-155. An ATP-binding site is contributed by 175 to 176; sequence TD. The 79-residue stretch at 282 to 360 folds into the PUA domain; that stretch reads RGRVVLDAGA…SEIEAVLGYV (79 aa).

It belongs to the glutamate 5-kinase family.

It localises to the cytoplasm. The enzyme catalyses L-glutamate + ATP = L-glutamyl 5-phosphate + ADP. It participates in amino-acid biosynthesis; L-proline biosynthesis; L-glutamate 5-semialdehyde from L-glutamate: step 1/2. Catalyzes the transfer of a phosphate group to glutamate to form L-glutamate 5-phosphate. The protein is Glutamate 5-kinase of Ralstonia nicotianae (strain ATCC BAA-1114 / GMI1000) (Ralstonia solanacearum).